A 510-amino-acid chain; its full sequence is Putative serine protease K12H4.7 (510 aa).

An N-terminal signal peptide occupies residues 1 to 19; the sequence is MKTLLAVLLAACVLTQVLS. Residue S187 is the Charge relay system of the active site. N-linked (GlcNAc...) asparagine glycosylation is present at N234. D452 acts as the Charge relay system in catalysis. N-linked (GlcNAc...) asparagine glycosylation is present at N473. The active-site Charge relay system is the H477.

The protein belongs to the peptidase S28 family.

This chain is Putative serine protease K12H4.7, found in Caenorhabditis elegans.